The chain runs to 250 residues: 2,3-bisphosphoglycerate-dependent phosphoglycerate mutase (250 aa).

Residues 10 to 17 (RHGESQWN), 23 to 24 (TG), R62, 89 to 92 (ERHY), K100, 116 to 117 (RR), and 185 to 186 (GN) each bind substrate. The active-site Tele-phosphohistidine intermediate is the H11. Residue E89 is the Proton donor/acceptor of the active site.

This sequence belongs to the phosphoglycerate mutase family. BPG-dependent PGAM subfamily. In terms of assembly, homodimer.

It carries out the reaction (2R)-2-phosphoglycerate = (2R)-3-phosphoglycerate. Its pathway is carbohydrate degradation; glycolysis; pyruvate from D-glyceraldehyde 3-phosphate: step 3/5. In terms of biological role, catalyzes the interconversion of 2-phosphoglycerate and 3-phosphoglycerate. This chain is 2,3-bisphosphoglycerate-dependent phosphoglycerate mutase, found in Citrobacter koseri (strain ATCC BAA-895 / CDC 4225-83 / SGSC4696).